Here is a 284-residue protein sequence, read N- to C-terminus: Phosphatidylglycerol--prolipoprotein diacylglyceryl transferase (284 aa).

7 consecutive transmembrane segments (helical) span residues 14–34 (IAFS…ACAI), 62–82 (YFLW…ILIY), 106–126 (FVGI…IASY), 136–156 (LLIY…FGRI), 190–210 (PSQL…VLWA), 218–238 (GLLI…AEFY), and 252–272 (LSMG…ILLY). Arginine 155 serves as a coordination point for a 1,2-diacyl-sn-glycero-3-phospho-(1'-sn-glycerol).

The protein belongs to the Lgt family.

The protein localises to the cell inner membrane. It carries out the reaction L-cysteinyl-[prolipoprotein] + a 1,2-diacyl-sn-glycero-3-phospho-(1'-sn-glycerol) = an S-1,2-diacyl-sn-glyceryl-L-cysteinyl-[prolipoprotein] + sn-glycerol 1-phosphate + H(+). The protein operates within protein modification; lipoprotein biosynthesis (diacylglyceryl transfer). Its function is as follows. Catalyzes the transfer of the diacylglyceryl group from phosphatidylglycerol to the sulfhydryl group of the N-terminal cysteine of a prolipoprotein, the first step in the formation of mature lipoproteins. This is Phosphatidylglycerol--prolipoprotein diacylglyceryl transferase from Helicobacter pylori (strain Shi470).